Here is a 276-residue protein sequence, read N- to C-terminus: Large ribosomal subunit protein uL2 (276 aa).

Positions 223–276 (VVMNPVDHPHGGGEGKSSGGRHPVSPWGKKTRGPKTRNNKVTDRLIIRRRNAKR) are disordered. The segment covering 251 to 260 (KKTRGPKTRN) has biased composition (basic residues).

The protein belongs to the universal ribosomal protein uL2 family. As to quaternary structure, part of the 50S ribosomal subunit. Forms a bridge to the 30S subunit in the 70S ribosome.

One of the primary rRNA binding proteins. Required for association of the 30S and 50S subunits to form the 70S ribosome, for tRNA binding and peptide bond formation. It has been suggested to have peptidyltransferase activity; this is somewhat controversial. Makes several contacts with the 16S rRNA in the 70S ribosome. This is Large ribosomal subunit protein uL2 from Hyphomonas neptunium (strain ATCC 15444).